Here is a 102-residue protein sequence, read N- to C-terminus: Probable endoribonuclease MazF2 (102 aa).

This sequence belongs to the PemK/MazF family. In terms of assembly, forms a complex with cognate antitoxin MazE2.

Its function is as follows. Toxic component of a type II toxin-antitoxin (TA) system. Acts as an endoribonuclease. Neutralized by coexpression with cognate antitoxin MazE2. The chain is Probable endoribonuclease MazF2 (mazF2) from Mycobacterium tuberculosis (strain CDC 1551 / Oshkosh).